A 364-amino-acid polypeptide reads, in one-letter code: Mannose-1-phosphate guanylyltransferase catalytic subunit beta (364 aa).

Residues 2-220 (KALILVGGYG…PGFWMDVGQP (219 aa)) form a substrate-binding domain region. Asp109 contacts GDP-alpha-D-mannose. Asp109 contributes to the Mg(2+) binding site. Lys160 is an active-site residue. Asp216 contacts GDP-alpha-D-mannose. Asp216 is a Mg(2+) binding site. A hexapeptide repeat domain region spans residues 243 to 364 (ATGSNIHGTA…VNVPSKDIIM (122 aa)).

It belongs to the transferase hexapeptide repeat family. As to quaternary structure, component of the GMPPA-GMPPB mannose-1-phosphate guanylyltransferase complex composed of 4 GMPPA subunits and 8 tag-335/GMPPB subunits; the complex is organized into three layers, a central layer made up of 2 GMPPA dimers sandwiched between two layers each made up of 2 tag-335/GMPPB dimers. Catalytic activity of tag-335/GMPPB is reduced when part of the complex and binding of GDP-alpha-D-Mannose by GMPPA induces allosteric feedback inhibition of tag-335/GMPPB. The cofactor is Mg(2+).

It carries out the reaction alpha-D-mannose 1-phosphate + GTP + H(+) = GDP-alpha-D-mannose + diphosphate. It functions in the pathway nucleotide-sugar biosynthesis; GDP-alpha-D-mannose biosynthesis; GDP-alpha-D-mannose from alpha-D-mannose 1-phosphate (GTP route): step 1/1. Enzyme activity is reduced by incorporation into the GMPPA-GMPPB mannose-1-phosphate guanylyltransferase complex. Allosterically inhibited, when part of the GMPPA-GMPPB complex, by GDP-alpha-D-mannose binding to GMPPA. Catalytic subunit of the GMPPA-GMPPB mannose-1-phosphate guanylyltransferase complex. Catalyzes the formation of GDP-mannose, an essential precursor of glycan moieties of glycoproteins and glycolipids. Can catalyze the reverse reaction in vitro. Together with GMPPA regulates GDP-alpha-D-mannose levels. This Caenorhabditis briggsae protein is Mannose-1-phosphate guanylyltransferase catalytic subunit beta.